Consider the following 274-residue polypeptide: Proto-oncogene FRAT1 (274 aa).

Disordered stretches follow at residues 1 to 24 (MPCRREEEEEAGDEAEGEEDDDSF), 55 to 107 (AHDR…PGAV), 132 to 194 (GASA…DDPH), and 232 to 274 (GPLS…VPGS). Positions 7 to 23 (EEEEAGDEAEGEEDDDS) are enriched in acidic residues. The interval 191–214 (DDPHRLLQQLVLSGNLIKEAVRRL) is involved in GSK-3 binding. Residues serine 243 and serine 246 each carry the phosphoserine modification.

It belongs to the GSK-3-binding protein family. In terms of assembly, binds DVL1. Binds GSK-3 and prevent GSK-3-dependent phosphorylation. Post-translationally, phosphorylated. In terms of tissue distribution, highly expressed in testis. Lower level of expression in spleen, thymus and brain.

Its subcellular location is the cytoplasm. Positively regulates the Wnt signaling pathway by stabilizing beta-catenin through the association with GSK-3. May play a role in tumor progression and collaborate with PIM1 and MYC in lymphomagenesis. In Mus musculus (Mouse), this protein is Proto-oncogene FRAT1 (Frat1).